The primary structure comprises 405 residues: Putative aminotransferase AatC (405 aa).

Lys-238 carries the post-translational modification N6-(pyridoxal phosphate)lysine.

This sequence belongs to the class-I pyridoxal-phosphate-dependent aminotransferase family. As to quaternary structure, homodimer. Pyridoxal 5'-phosphate serves as cofactor.

The protein localises to the cytoplasm. This is Putative aminotransferase AatC (aatC) from Rhizobium meliloti (strain 1021) (Ensifer meliloti).